The primary structure comprises 138 residues: Small ribosomal subunit protein uS11 (138 aa).

A compositionally biased stretch (low complexity) spans Met-1–Lys-12. The tract at residues Met-1 to His-27 is disordered. The segment covering Lys-13–Lys-22 has biased composition (basic residues).

The protein belongs to the universal ribosomal protein uS11 family. Part of the 30S ribosomal subunit. Interacts with proteins S7 and S18. Binds to IF-3.

Located on the platform of the 30S subunit, it bridges several disparate RNA helices of the 16S rRNA. Forms part of the Shine-Dalgarno cleft in the 70S ribosome. In Mycolicibacterium paratuberculosis (strain ATCC BAA-968 / K-10) (Mycobacterium paratuberculosis), this protein is Small ribosomal subunit protein uS11.